Reading from the N-terminus, the 396-residue chain is Tryptophan synthase beta chain (396 aa).

Lysine 88 carries the post-translational modification N6-(pyridoxal phosphate)lysine.

This sequence belongs to the TrpB family. Tetramer of two alpha and two beta chains. It depends on pyridoxal 5'-phosphate as a cofactor.

It catalyses the reaction (1S,2R)-1-C-(indol-3-yl)glycerol 3-phosphate + L-serine = D-glyceraldehyde 3-phosphate + L-tryptophan + H2O. The protein operates within amino-acid biosynthesis; L-tryptophan biosynthesis; L-tryptophan from chorismate: step 5/5. In terms of biological role, the beta subunit is responsible for the synthesis of L-tryptophan from indole and L-serine. The polypeptide is Tryptophan synthase beta chain (Shewanella sp. (strain ANA-3)).